The chain runs to 1085 residues: Toxin VasX (1085 aa).

Positions 1-20 (MSNPNQAAKTGQTNDAQNPA) are disordered. The next 4 membrane-spanning stretches (helical) occupy residues 753-773 (ALGE…AISA), 813-833 (IALV…ESWG), 860-880 (IIFY…PSIA), and 884-904 (AGWM…GVIL).

It is found in the secreted. Its subcellular location is the host membrane. Functionally, toxin secreted by the type VI (T6SS) secretion system that acts on prokaryotic target cells. Acts in conjunction with VasW, an accessory protein to VasX, to compromise the inner membrane of prokaryotic target cells. The polypeptide is Toxin VasX (Vibrio cholerae serotype O1 (strain ATCC 39315 / El Tor Inaba N16961)).